Reading from the N-terminus, the 656-residue chain is Translation factor GUF1, mitochondrial (656 aa).

The transit peptide at Met1–Arg28 directs the protein to the mitochondrion. The tr-type G domain occupies Glu55 to Asp235. Residues Ala64 to Ser71, Asp128 to His132, and Asn182 to Asp185 contribute to the GTP site.

Belongs to the TRAFAC class translation factor GTPase superfamily. Classic translation factor GTPase family. LepA subfamily.

It localises to the mitochondrion inner membrane. The catalysed reaction is GTP + H2O = GDP + phosphate + H(+). In terms of biological role, promotes mitochondrial protein synthesis. May act as a fidelity factor of the translation reaction, by catalyzing a one-codon backward translocation of tRNAs on improperly translocated ribosomes. Binds to mitochondrial ribosomes in a GTP-dependent manner. This is Translation factor GUF1, mitochondrial from Yarrowia lipolytica (strain CLIB 122 / E 150) (Yeast).